A 232-amino-acid chain; its full sequence is Beta-casein (232 aa).

An N-terminal signal peptide occupies residues Met-1–Ala-15. Phosphoserine is present on residues Ser-30, Ser-32, Ser-33, and Ser-34.

The protein belongs to the beta-casein family. As to expression, mammary gland specific. Secreted in milk.

Its subcellular location is the secreted. Its function is as follows. Important role in determination of the surface properties of the casein micelles. The polypeptide is Beta-casein (CSN2) (Camelus dromedarius (Dromedary)).